Here is a 491-residue protein sequence, read N- to C-terminus: MKNQDQALIFEVSKEGRIGYSLPKLDVEEVKLEDVFESDYIRVEDAELPEVSELDIMRHYTALSNRNHGVDSGFYPLGSCTMKYNPKINESVARFAGFANIHPLQDEETVQGAMELMYDLQEHLIEITGMDTVTLQPAAGAHGEWTGLMLIRAYHEANGDFNRTKVIVPDSAHGTNPASATVAGFETITVKSNEHGLVDLEDLKRVVNEETAALMLTNPNTLGLFEENILEMAEIVHNAGGKLYYDGANLNAVLSQARPGDMGFDVVHLNLHKTFTGPHGGGGPGSGPVGVKADLIPYLPKPILEKTENGYHFNYDRPEAIGRVKPFYGNFGINVRAYTYIRSMGPDGLRAVTEYAVLNANYMMRRLAPFYDLPFDRHCKHEFVLSGRRQKKLGVRTLDIAKRLLDFGYHPPTIYFPLNVEECIMIEPTETESKETLDGFIDKMIQIAKEVEENPEVVQEAPHTTVIKRLDETMAARKPVLRYAKPAPVQV.

Lys-273 bears the N6-(pyridoxal phosphate)lysine mark.

It belongs to the GcvP family. C-terminal subunit subfamily. The glycine cleavage system is composed of four proteins: P, T, L and H. In this organism, the P 'protein' is a heterodimer of two subunits. It depends on pyridoxal 5'-phosphate as a cofactor.

It carries out the reaction N(6)-[(R)-lipoyl]-L-lysyl-[glycine-cleavage complex H protein] + glycine + H(+) = N(6)-[(R)-S(8)-aminomethyldihydrolipoyl]-L-lysyl-[glycine-cleavage complex H protein] + CO2. The glycine cleavage system catalyzes the degradation of glycine. The P protein binds the alpha-amino group of glycine through its pyridoxal phosphate cofactor; CO(2) is released and the remaining methylamine moiety is then transferred to the lipoamide cofactor of the H protein. This Bacillus thuringiensis (strain Al Hakam) protein is Probable glycine dehydrogenase (decarboxylating) subunit 2.